Consider the following 104-residue polypeptide: uncharacterized protein (104 aa).

A disordered region spans residues 1–24 (MISTEKSSDAVAMHCPSGDQHNSE).

This is an uncharacterized protein from Saccharomyces cerevisiae (strain ATCC 204508 / S288c) (Baker's yeast).